We begin with the raw amino-acid sequence, 1399 residues long: DNA-directed RNA polymerase subunit beta' (1399 aa).

Residues Cys-70, Cys-72, Cys-85, and Cys-88 each contribute to the Zn(2+) site. Residues Asp-460, Asp-462, and Asp-464 each coordinate Mg(2+). Zn(2+) contacts are provided by Cys-814, Cys-888, Cys-895, and Cys-898.

The protein belongs to the RNA polymerase beta' chain family. The RNAP catalytic core consists of 2 alpha, 1 beta, 1 beta' and 1 omega subunit. When a sigma factor is associated with the core the holoenzyme is formed, which can initiate transcription. The cofactor is Mg(2+). Zn(2+) is required as a cofactor.

It carries out the reaction RNA(n) + a ribonucleoside 5'-triphosphate = RNA(n+1) + diphosphate. Its function is as follows. DNA-dependent RNA polymerase catalyzes the transcription of DNA into RNA using the four ribonucleoside triphosphates as substrates. In Pseudomonas syringae pv. syringae (strain B728a), this protein is DNA-directed RNA polymerase subunit beta'.